Reading from the N-terminus, the 144-residue chain is uncharacterized protein (144 aa).

Residues 24–67 are a coiled coil; that stretch reads KLKELYQRLNQGINVEEVLKETVEDYKEKMEKYILEVLEEIEKY.

This is an uncharacterized protein from Aquifex aeolicus (strain VF5).